The chain runs to 212 residues: MKRYFVTGTDTDCGKTFVTNQLVNYFSSSAAIKPIASGCEYSENQLVNSDALLHQQQNHLPLEVVNPWRFRLPVSPHLSARADGASIDVHKVADYCLNLQLNDIKKLFIEGAGGLMVPLNEQDTWLDFLKLTRIPVILVVGMKLGCINHTLLTQEVFEINKIKCQGWIANCLDQDMLMLDENISTLEAKLKYPLLARTNYGGKISDICLSSL.

Residue 12-17 (DCGKTF) participates in ATP binding. T16 is a binding site for Mg(2+). The active site involves K33. Residue S37 coordinates substrate. ATP-binding positions include D50, 110-113 (EGAG), and 170-171 (NC). Positions 50 and 110 each coordinate Mg(2+).

The protein belongs to the dethiobiotin synthetase family. As to quaternary structure, homodimer. Mg(2+) serves as cofactor.

The protein localises to the cytoplasm. The catalysed reaction is (7R,8S)-7,8-diammoniononanoate + CO2 + ATP = (4R,5S)-dethiobiotin + ADP + phosphate + 3 H(+). Its pathway is cofactor biosynthesis; biotin biosynthesis; biotin from 7,8-diaminononanoate: step 1/2. Catalyzes a mechanistically unusual reaction, the ATP-dependent insertion of CO2 between the N7 and N8 nitrogen atoms of 7,8-diaminopelargonic acid (DAPA, also called 7,8-diammoniononanoate) to form a ureido ring. The sequence is that of ATP-dependent dethiobiotin synthetase BioD from Legionella pneumophila (strain Lens).